The chain runs to 219 residues: 2-C-methyl-D-erythritol 4-phosphate cytidylyltransferase (219 aa).

This sequence belongs to the IspD/TarI cytidylyltransferase family. IspD subfamily.

It carries out the reaction 2-C-methyl-D-erythritol 4-phosphate + CTP + H(+) = 4-CDP-2-C-methyl-D-erythritol + diphosphate. It functions in the pathway isoprenoid biosynthesis; isopentenyl diphosphate biosynthesis via DXP pathway; isopentenyl diphosphate from 1-deoxy-D-xylulose 5-phosphate: step 2/6. Functionally, catalyzes the formation of 4-diphosphocytidyl-2-C-methyl-D-erythritol from CTP and 2-C-methyl-D-erythritol 4-phosphate (MEP). The chain is 2-C-methyl-D-erythritol 4-phosphate cytidylyltransferase from Chlamydia trachomatis serovar D (strain ATCC VR-885 / DSM 19411 / UW-3/Cx).